Reading from the N-terminus, the 712-residue chain is Cyclolysin secretion/processing ATP-binding protein CyaB (712 aa).

Positions 7 to 128 (QCASVPDSGL…ALWAGELLLC (122 aa)) constitute a Peptidase C39 domain. The ABC transmembrane type-1 domain occupies 157-439 (IGEVLLISLV…LAQLWNDFQQ (283 aa)). 6 helical membrane-spanning segments follow: residues 160–180 (VLLI…FFQV), 194–214 (LNVI…LTGI), 272–292 (AVTV…MFFY), 298–318 (LVVL…TPVL), 367–387 (VAAG…VTLI), and 390–410 (LVAL…RMTV). The 236-residue stretch at 471-706 (IELDRVSFRY…GGLYARLQAL (236 aa)) folds into the ABC transporter domain. 505–512 (GRSGSGKS) provides a ligand contact to ATP.

It belongs to the ABC transporter superfamily. Cyclolysin exporter (TC 3.A.1.109.2) family.

It is found in the cell membrane. In terms of biological role, involved in the export of calmodulin-sensitive adenylate cyclase-hemolysin (cyclolysin). This chain is Cyclolysin secretion/processing ATP-binding protein CyaB (cyaB), found in Bordetella pertussis (strain ATCC 9797 / DSM 5571 / CCUG 30873 / LMG 14455 / NCTC 10739 / 18323).